A 152-amino-acid polypeptide reads, in one-letter code: Large ribosomal subunit protein bL9 (152 aa).

The protein belongs to the bacterial ribosomal protein bL9 family.

Functionally, binds to the 23S rRNA. The protein is Large ribosomal subunit protein bL9 of Saccharophagus degradans (strain 2-40 / ATCC 43961 / DSM 17024).